The following is a 351-amino-acid chain: UDP-N-acetylglucosamine--N-acetylmuramyl-(pentapeptide) pyrophosphoryl-undecaprenol N-acetylglucosamine transferase (351 aa).

Residues 12 to 14 (TGG), Asn124, Arg160, Ser188, Ile239, 258 to 263 (ALTVCE), and Gln283 each bind UDP-N-acetyl-alpha-D-glucosamine.

The protein belongs to the glycosyltransferase 28 family. MurG subfamily.

It is found in the cell inner membrane. It catalyses the reaction di-trans,octa-cis-undecaprenyl diphospho-N-acetyl-alpha-D-muramoyl-L-alanyl-D-glutamyl-meso-2,6-diaminopimeloyl-D-alanyl-D-alanine + UDP-N-acetyl-alpha-D-glucosamine = di-trans,octa-cis-undecaprenyl diphospho-[N-acetyl-alpha-D-glucosaminyl-(1-&gt;4)]-N-acetyl-alpha-D-muramoyl-L-alanyl-D-glutamyl-meso-2,6-diaminopimeloyl-D-alanyl-D-alanine + UDP + H(+). It participates in cell wall biogenesis; peptidoglycan biosynthesis. In terms of biological role, cell wall formation. Catalyzes the transfer of a GlcNAc subunit on undecaprenyl-pyrophosphoryl-MurNAc-pentapeptide (lipid intermediate I) to form undecaprenyl-pyrophosphoryl-MurNAc-(pentapeptide)GlcNAc (lipid intermediate II). This Glaesserella parasuis serovar 5 (strain SH0165) (Haemophilus parasuis) protein is UDP-N-acetylglucosamine--N-acetylmuramyl-(pentapeptide) pyrophosphoryl-undecaprenol N-acetylglucosamine transferase.